Consider the following 187-residue polypeptide: Elongation factor P (187 aa).

It belongs to the elongation factor P family.

The protein resides in the cytoplasm. It participates in protein biosynthesis; polypeptide chain elongation. Functionally, involved in peptide bond synthesis. Stimulates efficient translation and peptide-bond synthesis on native or reconstituted 70S ribosomes in vitro. Probably functions indirectly by altering the affinity of the ribosome for aminoacyl-tRNA, thus increasing their reactivity as acceptors for peptidyl transferase. This is Elongation factor P from Mycobacteroides abscessus (strain ATCC 19977 / DSM 44196 / CCUG 20993 / CIP 104536 / JCM 13569 / NCTC 13031 / TMC 1543 / L948) (Mycobacterium abscessus).